The sequence spans 320 residues: Lipoyl synthase (320 aa).

The [4Fe-4S] cluster site is built by C67, C72, C78, C93, C97, C100, and S307. The 218-residue stretch at 79 to 296 (FNHGTATFMI…GVIAKEIGFT (218 aa)) folds into the Radical SAM core domain.

This sequence belongs to the radical SAM superfamily. Lipoyl synthase family. It depends on [4Fe-4S] cluster as a cofactor.

Its subcellular location is the cytoplasm. The catalysed reaction is [[Fe-S] cluster scaffold protein carrying a second [4Fe-4S](2+) cluster] + N(6)-octanoyl-L-lysyl-[protein] + 2 oxidized [2Fe-2S]-[ferredoxin] + 2 S-adenosyl-L-methionine + 4 H(+) = [[Fe-S] cluster scaffold protein] + N(6)-[(R)-dihydrolipoyl]-L-lysyl-[protein] + 4 Fe(3+) + 2 hydrogen sulfide + 2 5'-deoxyadenosine + 2 L-methionine + 2 reduced [2Fe-2S]-[ferredoxin]. It participates in protein modification; protein lipoylation via endogenous pathway; protein N(6)-(lipoyl)lysine from octanoyl-[acyl-carrier-protein]: step 2/2. Catalyzes the radical-mediated insertion of two sulfur atoms into the C-6 and C-8 positions of the octanoyl moiety bound to the lipoyl domains of lipoate-dependent enzymes, thereby converting the octanoylated domains into lipoylated derivatives. In Pseudoalteromonas atlantica (strain T6c / ATCC BAA-1087), this protein is Lipoyl synthase.